The following is a 275-amino-acid chain: Ribosomal RNA small subunit methyltransferase A (275 aa).

Residues N28, L30, G55, E77, D103, and N123 each contribute to the S-adenosyl-L-methionine site.

It belongs to the class I-like SAM-binding methyltransferase superfamily. rRNA adenine N(6)-methyltransferase family. RsmA subfamily.

Its subcellular location is the cytoplasm. The catalysed reaction is adenosine(1518)/adenosine(1519) in 16S rRNA + 4 S-adenosyl-L-methionine = N(6)-dimethyladenosine(1518)/N(6)-dimethyladenosine(1519) in 16S rRNA + 4 S-adenosyl-L-homocysteine + 4 H(+). Functionally, specifically dimethylates two adjacent adenosines (A1518 and A1519) in the loop of a conserved hairpin near the 3'-end of 16S rRNA in the 30S particle. May play a critical role in biogenesis of 30S subunits. The protein is Ribosomal RNA small subunit methyltransferase A of Rhizobium etli (strain ATCC 51251 / DSM 11541 / JCM 21823 / NBRC 15573 / CFN 42).